The following is a 38-amino-acid chain: Photosystem II reaction center protein L (38 aa).

The helical transmembrane segment at 17–37 (SLYWGLLLIFVLAVPFSNYFF) threads the bilayer.

It belongs to the PsbL family. PSII is composed of 1 copy each of membrane proteins PsbA, PsbB, PsbC, PsbD, PsbE, PsbF, PsbH, PsbI, PsbJ, PsbK, PsbL, PsbM, PsbT, PsbX, PsbY, PsbZ, Psb30/Ycf12, at least 3 peripheral proteins of the oxygen-evolving complex and a large number of cofactors. It forms dimeric complexes.

The protein resides in the plastid. Its subcellular location is the chloroplast thylakoid membrane. Functionally, one of the components of the core complex of photosystem II (PSII). PSII is a light-driven water:plastoquinone oxidoreductase that uses light energy to abstract electrons from H(2)O, generating O(2) and a proton gradient subsequently used for ATP formation. It consists of a core antenna complex that captures photons, and an electron transfer chain that converts photonic excitation into a charge separation. This subunit is found at the monomer-monomer interface and is required for correct PSII assembly and/or dimerization. In Pinus thunbergii (Japanese black pine), this protein is Photosystem II reaction center protein L.